A 627-amino-acid chain; its full sequence is Chaperone protein HtpG (627 aa).

Residues 1–339 form an a; substrate-binding region; it reads MKGQETRGFQ…SNDLPLNVSR (339 aa). The tract at residues 340–555 is b; it reads EILQDSRVTQ…ADEMSTQMAK (216 aa). The interval 556 to 627 is c; it reads LFAAAGQQAP…IRRMNQLLSA (72 aa).

It belongs to the heat shock protein 90 family. In terms of assembly, homodimer.

The protein localises to the cytoplasm. Molecular chaperone. Has ATPase activity. This Pectobacterium atrosepticum (strain SCRI 1043 / ATCC BAA-672) (Erwinia carotovora subsp. atroseptica) protein is Chaperone protein HtpG.